The chain runs to 95 residues: Feather keratin B-4 (95 aa).

Position 1 is an N-acetylserine (S1).

The protein belongs to the avian keratin family. The avian keratins (F-ker, S-ker, C-ker and B-ker) are a complex mixture of very similar polypeptides.

The chain is Feather keratin B-4 from Anas platyrhynchos (Mallard).